The primary structure comprises 101 residues: Integration host factor subunit alpha (101 aa).

The protein belongs to the bacterial histone-like protein family. Heterodimer of an alpha and a beta chain.

In terms of biological role, this protein is one of the two subunits of integration host factor, a specific DNA-binding protein that functions in genetic recombination as well as in transcriptional and translational control. The protein is Integration host factor subunit alpha of Halorhodospira halophila (strain DSM 244 / SL1) (Ectothiorhodospira halophila (strain DSM 244 / SL1)).